Here is a 386-residue protein sequence, read N- to C-terminus: Succinate--CoA ligase [ADP-forming] subunit beta (386 aa).

In terms of domain architecture, ATP-grasp spans 9 to 244 (KEILRSYGVS…LDEEDPKEVE (236 aa)). ATP contacts are provided by residues Lys-46, 53-55 (GRG), Glu-99, Cys-102, and Glu-107. Mg(2+) is bound by residues Asn-199 and Asp-213. Substrate contacts are provided by residues Asn-264 and 321 to 323 (GIM).

It belongs to the succinate/malate CoA ligase beta subunit family. As to quaternary structure, heterotetramer of two alpha and two beta subunits. Requires Mg(2+) as cofactor.

It catalyses the reaction succinate + ATP + CoA = succinyl-CoA + ADP + phosphate. The catalysed reaction is GTP + succinate + CoA = succinyl-CoA + GDP + phosphate. The protein operates within carbohydrate metabolism; tricarboxylic acid cycle; succinate from succinyl-CoA (ligase route): step 1/1. Succinyl-CoA synthetase functions in the citric acid cycle (TCA), coupling the hydrolysis of succinyl-CoA to the synthesis of either ATP or GTP and thus represents the only step of substrate-level phosphorylation in the TCA. The beta subunit provides nucleotide specificity of the enzyme and binds the substrate succinate, while the binding sites for coenzyme A and phosphate are found in the alpha subunit. This chain is Succinate--CoA ligase [ADP-forming] subunit beta, found in Geobacillus thermodenitrificans (strain NG80-2).